Here is a 114-residue protein sequence, read N- to C-terminus: Holo-[acyl-carrier-protein] synthase (114 aa).

Mg(2+) contacts are provided by aspartate 5 and glutamate 50.

The protein belongs to the P-Pant transferase superfamily. AcpS family. Requires Mg(2+) as cofactor.

The protein resides in the cytoplasm. The enzyme catalyses apo-[ACP] + CoA = holo-[ACP] + adenosine 3',5'-bisphosphate + H(+). In terms of biological role, transfers the 4'-phosphopantetheine moiety from coenzyme A to a Ser of acyl-carrier-protein. This chain is Holo-[acyl-carrier-protein] synthase, found in Campylobacter curvus (strain 525.92).